The sequence spans 140 residues: Dehydratase ustZ (140 aa).

Positions 18-113 (PGISTEDYRN…GPDHEKFADT (96 aa)) constitute an EthD domain.

It belongs to the tpcK family.

It catalyses the reaction naphtopyrone YWA1 = norrubrofusarin + H2O + H(+). The protein operates within secondary metabolite biosynthesis. Dehydratase; part of the gene cluster that mediates the biosynthesis of ustilaginoidins, dimeric gamma-naphthopyrones isolated from different fungal species. The first step in the biosynthesis of ustilaginoidins is the production of gamma-naphthopyrone precursor YWA1 by the non-reducing polyketide synthase ustP, via condensation of one acetyl-CoA starter unit with 6 malonyl-CoA units. YWA1 is then probably substrate of the ustZ to yield norrubrofusarin via a dehydration reaction. A key enzyme in the biosynthetic pathway is the laccase ustL, which catalyzes the oxidative dimerization of norrubrofusarin to ustilaginoidin A. It can produce the M- and P-atropisomers in varying amounts, depending on the reaction conditions. For the biosynthesis of 3-methylustilaginoid in derivatives such as chaetochromin A, a methylated derivative of YWA1 is required. The C-methylation is considered to be catalyzed by ustM, the phosphopantetheine attachment site of which indicates that it acts on the growing polyketide chain before release of the product. For the biosynthesis of chaetochromin A, it is assumed that saturation of the D2 double bond takes place before dimerization, and is probably catalyzed by an external reductase because no candidate gene was identified within the cluster. In Ustilaginoidea virens (Rice false smut fungus), this protein is Dehydratase ustZ.